A 306-amino-acid polypeptide reads, in one-letter code: Ribonuclease Z (306 aa).

7 residues coordinate Zn(2+): histidine 63, histidine 65, aspartate 67, histidine 68, histidine 140, aspartate 211, and histidine 269. Catalysis depends on aspartate 67, which acts as the Proton acceptor.

It belongs to the RNase Z family. In terms of assembly, homodimer. The cofactor is Zn(2+).

The enzyme catalyses Endonucleolytic cleavage of RNA, removing extra 3' nucleotides from tRNA precursor, generating 3' termini of tRNAs. A 3'-hydroxy group is left at the tRNA terminus and a 5'-phosphoryl group is left at the trailer molecule.. Functionally, zinc phosphodiesterase, which displays some tRNA 3'-processing endonuclease activity. Probably involved in tRNA maturation, by removing a 3'-trailer from precursor tRNA. This chain is Ribonuclease Z, found in Listeria innocua serovar 6a (strain ATCC BAA-680 / CLIP 11262).